The following is a 219-amino-acid chain: Envelope protein US9 homolog (219 aa).

At 1-193 the chain is on the intravirion side; the sequence is MEKAEAAAVV…RHRRRRVALT (193 aa). The Di-leucine internalization motif signature appears at 145–146; it reads LL. Residues 153–168 are acidic; sequence DYDSESGCYYSESDNE. Phosphoserine; by host CK2 is present on residues Ser163 and Ser165. Residues 194 to 214 traverse the membrane as a helical; Signal-anchor for type II membrane protein segment; that stretch reads VAGVILVVVLCAISGIVGAFL. At 215–219 the chain is on the virion surface side; that stretch reads ARVFP.

It belongs to the alphaherpesvirinae envelope protein US9 family. Post-translationally, phosphorylated on serines within the acidic cluster. Phosphorylation determines whether endocytosed viral US9 traffics to the trans-Golgi network or recycles to the cell membrane.

The protein resides in the virion membrane. It is found in the host Golgi apparatus membrane. The protein localises to the host smooth endoplasmic reticulum membrane. It localises to the host cell membrane. Functionally, essential for the anterograde spread of the infection throughout the host nervous system. Together with the gE/gI heterodimer, US9 is involved in the sorting and transport of viral structural components toward axon tips. The protein is Envelope protein US9 homolog of Equine herpesvirus 1 (strain Kentucky A) (EHV-1).